A 147-amino-acid polypeptide reads, in one-letter code: Deoxyuridine 5'-triphosphate nucleotidohydrolase (147 aa).

Residues 68–70, N81, and 85–87 each bind substrate; these read RSG and TID.

Belongs to the dUTPase family. Requires Mg(2+) as cofactor.

The catalysed reaction is dUTP + H2O = dUMP + diphosphate + H(+). The protein operates within pyrimidine metabolism; dUMP biosynthesis; dUMP from dCTP (dUTP route): step 2/2. This enzyme is involved in nucleotide metabolism: it produces dUMP, the immediate precursor of thymidine nucleotides and it decreases the intracellular concentration of dUTP so that uracil cannot be incorporated into DNA. The protein is Deoxyuridine 5'-triphosphate nucleotidohydrolase of Solibacter usitatus (strain Ellin6076).